Consider the following 385-residue polypeptide: MENKEVCLVCQDFSSGYHYGIPSCNGCKTFFRRTVMKKQKFVCQFDQNCPVDKSIRCACRFCRFEKCLKVGMDKTSLQASRDPIGYTKRNKKTLRHPMNELSGDESNSCTPDRQLSPLRSFENSLNFLAVRERSANELRMSSYLPKRSLKQALCSKPLINDPIFMSKHATVSPRHTFEKLRFITQDDYHYWHERDWFVLTEYAKTFKVFKNMPYHDKTELVCHAAIVIPVLNQVYNSPDYGLDTVVFPDGTYYDRTHEPTRPAGLNRKKYQVLDLVLKPFREMEINFNEFAAFKAITFLNPDADISLESKHAINEERVLITKQLYAYMVQKDGLEKAIYRFGRLILMGTSMSKMACESKEAVWIADFFENIGFTSFAKELIFGDH.

Residues 4–79 (KEVCLVCQDF…VGMDKTSLQA (76 aa)) constitute a DNA-binding region (nuclear receptor). 2 consecutive NR C4-type zinc fingers follow at residues 7-27 (CLVC…CNGC) and 43-62 (CQFD…CRFC). Residues 81–110 (RDPIGYTKRNKKTLRHPMNELSGDESNSCT) are disordered. One can recognise an NR LBD domain in the interval 145–384 (PKRSLKQALC…SFAKELIFGD (240 aa)). An AF-2 region spans residues 373 to 384 (FTSFAKELIFGD).

Belongs to the nuclear hormone receptor family.

It is found in the nucleus. Probable transcription factor that acts in a feed-forward loop with nhr-10 to activate genes, including itself, involved in the vitamin B12-independent breakdown of the short-chain fatty acid propionate. This pathway is triggered in response to a diet low in vitamin B12, when canonical vitamin B12-dependent propionate breakdown cannot function; the resulting accumulation of propionate is probably sensed by nhr-68 and/or nhr-10. The polypeptide is Nuclear hormone receptor family member nhr-68 (Caenorhabditis elegans).